A 267-amino-acid chain; its full sequence is PF03932 family protein CutC (267 aa).

This sequence belongs to the CutC family.

It localises to the cytoplasm. The polypeptide is PF03932 family protein CutC (Xylella fastidiosa (strain Temecula1 / ATCC 700964)).